The following is an 887-amino-acid chain: Probable dual specificity protein kinase madd-3 (887 aa).

Disordered regions lie at residues 77–147, 163–299, 313–333, 347–475, and 504–533; these read PIKS…ISAA, AQPP…PKAL, LPQSSNQNTDDGQQPTTSTGG, TTIC…KSAA, and RKPSRSGLQASQARPKVPEIVSSQRTQHQD. Low complexity predominate over residues 108-118; the sequence is PTQNPVQLPLP. Basic and acidic residues predominate over residues 121–130; it reads VSEKPGDKKS. A compositionally biased stretch (polar residues) spans 177–192; that stretch reads SETNSGSGPVSKQVSG. Residues 217–241 are compositionally biased toward low complexity; that stretch reads SSASTRAKAASAVAPEANPAPVPTA. 2 stretches are compositionally biased toward polar residues: residues 314–332 and 356–366; these read PQSSNQNTDDGQQPTTSTG and NVPSTSQPQQG. Basic and acidic residues predominate over residues 367–377; that stretch reads DNEKRLIEKKL. A compositionally biased stretch (low complexity) spans 407–419; the sequence is LSSNLTTTNNNNN. Residues 439–462 show a composition bias toward polar residues; that stretch reads FSTQAGSGNATTVDDPASTTTSKE. Residues 551–863 enclose the Protein kinase domain; the sequence is FTIYDTLGEG…LPEALQHRYF (313 aa). Residues 557-565 and Lys580 each bind ATP; that span reads LGEGTFGKV. Asp677 acts as the Proton acceptor in catalysis.

This sequence belongs to the protein kinase superfamily. CMGC Ser/Thr protein kinase family. Lammer subfamily. In terms of tissue distribution, expressed in body wall, vulval and anal depressor muscles.

It is found in the cytoplasm. Its subcellular location is the nucleus. Probable dual specificity kinase acting on both serine/threonine and tyrosine-containing substrates. Negatively regulates p38 MAPK signaling to allow for the plasma membrane of body wall muscle cells to form projections, also called muscle arms, that extend and connect the body wall muscles to target motor neurons. Negative regulation of p38 MAPK signaling may in turn modulate the trafficking of the muscle specific receptor eva-1 to the lysosome, to ensure proper display of the eva-1 receptor on the plasma membrane of muscle cells and allow for muscle arm extension towards guidance cues. The polypeptide is Probable dual specificity protein kinase madd-3 (Caenorhabditis elegans).